The chain runs to 317 residues: Transaldolase (317 aa).

K132 (schiff-base intermediate with substrate) is an active-site residue.

Belongs to the transaldolase family. Type 1 subfamily. As to quaternary structure, homodimer.

The protein resides in the cytoplasm. The enzyme catalyses D-sedoheptulose 7-phosphate + D-glyceraldehyde 3-phosphate = D-erythrose 4-phosphate + beta-D-fructose 6-phosphate. It participates in carbohydrate degradation; pentose phosphate pathway; D-glyceraldehyde 3-phosphate and beta-D-fructose 6-phosphate from D-ribose 5-phosphate and D-xylulose 5-phosphate (non-oxidative stage): step 2/3. Functionally, transaldolase is important for the balance of metabolites in the pentose-phosphate pathway. This Haemophilus influenzae (strain 86-028NP) protein is Transaldolase.